Consider the following 110-residue polypeptide: Small ribosomal subunit protein bS16 (110 aa).

The disordered stretch occupies residues 87–110; it reads ARNNPEKAVPRKERKAAAEAAAKK.

Belongs to the bacterial ribosomal protein bS16 family.

This Rhodopseudomonas palustris (strain HaA2) protein is Small ribosomal subunit protein bS16.